Consider the following 215-residue polypeptide: UPF0502 protein YceH (215 aa).

Belongs to the UPF0502 family.

The sequence is that of UPF0502 protein YceH from Salmonella paratyphi C (strain RKS4594).